A 368-amino-acid polypeptide reads, in one-letter code: Caffeine synthase 3 (368 aa).

Tyr-23 is a binding site for S-adenosyl-L-homocysteine. A caffeine-binding site is contributed by Thr-30. S-adenosyl-L-homocysteine is bound by residues Cys-65, Asn-70, Asp-102, Leu-103, Ser-137, and Phe-138. Caffeine contacts are provided by Tyr-155, His-158, and Trp-159. Asn-176 contributes to the Mg(2+) binding site. Arg-224 serves as a coordination point for caffeine. Mg(2+) is bound by residues Asp-262, Phe-264, and Asn-265. Residue Phe-320 coordinates caffeine.

Belongs to the methyltransferase superfamily. Type-7 methyltransferase family. Requires Mg(2+) as cofactor.

The enzyme catalyses theobromine + S-adenosyl-L-methionine = caffeine + S-adenosyl-L-homocysteine + H(+). It catalyses the reaction 7-methylxanthine + S-adenosyl-L-methionine = theobromine + S-adenosyl-L-homocysteine + H(+). The protein operates within alkaloid biosynthesis. Involved in the biosynthesis of caffeine. Catalyzes the conversion of 7-methylxanthine (7mX) to theobromine and of theobromine to caffeine. In Camellia sinensis (Tea plant), this protein is Caffeine synthase 3.